A 362-amino-acid polypeptide reads, in one-letter code: tRNA/tmRNA (uracil-C(5))-methyltransferase (362 aa).

Positions 186, 214, 219, 235, and 295 each coordinate S-adenosyl-L-methionine. Cys320 functions as the Nucleophile in the catalytic mechanism. Glu354 serves as the catalytic Proton acceptor.

It belongs to the class I-like SAM-binding methyltransferase superfamily. RNA M5U methyltransferase family. TrmA subfamily.

It carries out the reaction uridine(54) in tRNA + S-adenosyl-L-methionine = 5-methyluridine(54) in tRNA + S-adenosyl-L-homocysteine + H(+). The enzyme catalyses uridine(341) in tmRNA + S-adenosyl-L-methionine = 5-methyluridine(341) in tmRNA + S-adenosyl-L-homocysteine + H(+). In terms of biological role, dual-specificity methyltransferase that catalyzes the formation of 5-methyluridine at position 54 (m5U54) in all tRNAs, and that of position 341 (m5U341) in tmRNA (transfer-mRNA). This is tRNA/tmRNA (uracil-C(5))-methyltransferase from Dechloromonas aromatica (strain RCB).